The primary structure comprises 204 residues: HTH-type transcriptional repressor KstR (204 aa).

An HTH tetR-type domain is found at 18 to 78 (RERRKRILDA…SALGREFERI (61 aa)). A DNA-binding region (H-T-H motif) is located at residues 41–60 (QMRAVAERADVAVGTLYRYF).

Homodimer.

Controls the expression of genes used for utilizing diverse lipids as energy sources. This Mycolicibacterium smegmatis (strain ATCC 700084 / mc(2)155) (Mycobacterium smegmatis) protein is HTH-type transcriptional repressor KstR (kstR).